The chain runs to 739 residues: Protein NPGR2 (739 aa).

The segment at 32-71 (EQMRHREEEDKKSEVGVGRDYNGSSALSTAESENAKKLDN) is disordered. Residues 33-45 (QMRHREEEDKKSE) show a composition bias toward basic and acidic residues. Residues 53-63 (NGSSALSTAES) are compositionally biased toward polar residues. TPR repeat units lie at residues 90 to 127 (EEAR…KMKT), 162 to 195 (FEAI…VETS), 215 to 248 (TKAV…HWKL), 465 to 498 (PRVV…GAES), 500 to 533 (LEVW…TGKW), 536 to 569 (GKLL…LQVQ), 592 to 625 (LGTW…APYS), 626 to 659 (SVRY…DPMH), and 697 to 733 (HSAW…EETM).

Interacts with calmodulin in a calcium-dependent manner. Expressed in pollen, flowers and fruits.

The chain is Protein NPGR2 from Arabidopsis thaliana (Mouse-ear cress).